The primary structure comprises 436 residues: tRNA(Ile)-lysidine synthase (436 aa).

27 to 32 lines the ATP pocket; it reads SGGVDS.

It belongs to the tRNA(Ile)-lysidine synthase family.

The protein resides in the cytoplasm. It catalyses the reaction cytidine(34) in tRNA(Ile2) + L-lysine + ATP = lysidine(34) in tRNA(Ile2) + AMP + diphosphate + H(+). Its function is as follows. Ligates lysine onto the cytidine present at position 34 of the AUA codon-specific tRNA(Ile) that contains the anticodon CAU, in an ATP-dependent manner. Cytidine is converted to lysidine, thus changing the amino acid specificity of the tRNA from methionine to isoleucine. This is tRNA(Ile)-lysidine synthase from Vibrio vulnificus (strain CMCP6).